The chain runs to 117 residues: Probable non-functional T cell receptor gamma variable (117 aa).

The first 20 residues, 1–20 (MRWALAVLLAFLSPASQISS), serve as a signal peptide directing secretion. An Ig-like domain is found at 21 to 117 (NLEGRTKSVT…GFYYCATWDR (97 aa)). A disulfide bridge connects residues cysteine 41 and cysteine 112. N-linked (GlcNAc...) asparagine glycosylation occurs at asparagine 105.

As to quaternary structure, gamma-delta TR is a heterodimer composed of a gamma and delta chain; disulfide-linked. The gamma-delta TR is associated with the transmembrane signaling CD3 coreceptor proteins following the stoichiometry: a single gamma-delta TR heterodimer associates with one CD3D-CD3E heterodimer, one CD3G-CD3E heterodimer and one CD247 homodimer forming a stable octameric structure. Upon activation, gamma-delta TR complex associates with FCER1G to initiate intracellular signaling.

It localises to the cell membrane. Its function is as follows. Probable non-functional open reading frame (ORF) of V region of the variable domain of T cell receptor (TR) gamma chain. Non-functional ORF generally cannot participate in the synthesis of a productive T cell receptor (TR) chain due to altered V-(D)-J or switch recombination and/or splicing site (at mRNA level) and/or conserved amino acid change (protein level). Gamma-delta TRs recognize a variety of self and foreign non-peptide antigens frequently expressed at the epithelial boundaries between the host and external environment, including endogenous lipids presented by MH-like protein CD1D and phosphoantigens presented by butyrophilin-like molecule BTN3A1. Upon antigen recognition induces rapid, innate-like immune responses involved in pathogen clearance and tissue repair. Binding of gamma-delta TR complex to antigen triggers phosphorylation of immunoreceptor tyrosine-based activation motifs (ITAMs) in the CD3 chains by the LCK and FYN kinases, allowing the recruitment, phosphorylation, and activation of ZAP70 that facilitates phosphorylation of the scaffolding proteins LCP2 and LAT. This lead to the formation of a supramolecular signalosome that recruits the phospholipase PLCG1, resulting in calcium mobilization and ERK activation, ultimately leading to T cell expansion and differentiation into effector cells. Gamma-delta TRs are produced through somatic rearrangement of a limited repertoire of variable (V), diversity (D), and joining (J) genes. The potential diversity of gamma-delta TRs is conferred by the unique ability to rearrange (D) genes in tandem and to utilize all three reading frames. The combinatorial diversity is considerably increased by the sequence exonuclease trimming and random nucleotide (N) region additions which occur during the V-(D)-J rearrangements. In Homo sapiens (Human), this protein is Probable non-functional T cell receptor gamma variable.